The following is a 128-amino-acid chain: Centrosomal protein 15 (128 aa).

Its subcellular location is the cell projection. It localises to the cilium. May play a role in ciliary assembly. This chain is Centrosomal protein 15, found in Homo sapiens (Human).